The following is a 1091-amino-acid chain: ATP-citrate synthase (1091 aa).

Positions 4-265 (KAISEQTGKE…LDAKSGASLK (262 aa)) constitute an ATP-grasp domain. ATP-binding residues include Lys58, Arg66, Gly67, Pro109, Val111, and Glu118. At Tyr131 the chain carries Phosphotyrosine. Asp216 provides a ligand contact to ATP. The Mg(2+) site is built by Asp257, Ser260, and Ala262. Ser263 carries the post-translational modification Phosphoserine. Citrate is bound by residues Gly309, Asn346, Thr348, Tyr364, and Arg379. Residues 442-457 (SGSTSTPAPSRTASFS) are compositionally biased toward low complexity. Residues 442-471 (SGSTSTPAPSRTASFSESRTDEVAPAKKAK) are disordered. The residue at position 447 (Thr447) is a Phosphothreonine. Position 451 is a phosphoserine (Ser451). Ser455 carries the phosphoserine; by PKA and PKB/AKT1 or PKB/AKT2 or BCKDK modification. Ser459 is modified (phosphoserine). 3 positions are modified to N6-acetyllysine; alternate: Lys530, Lys536, and Lys544. Residues Lys530, Lys536, and Lys544 each participate in a glycyl lysine isopeptide (Lys-Gly) (interchain with G-Cter in ubiquitin); alternate cross-link. Phosphothreonine is present on Thr629. Ser653 carries the phosphoserine modification. Phosphotyrosine is present on Tyr672. His750 acts as the Tele-phosphohistidine intermediate in catalysis. 769 to 779 (LKEAGVFVPRS) provides a ligand contact to CoA. Ser829 carries the phosphoserine modification. 4 positions are modified to N6-acetyllysine: Lys938, Lys958, Lys968, and Lys1067. The residue at position 1090 (Ser1090) is a Phosphoserine.

This sequence in the N-terminal section; belongs to the succinate/malate CoA ligase beta subunit family. It in the C-terminal section; belongs to the succinate/malate CoA ligase alpha subunit family. In terms of assembly, homotetramer. Requires Mg(2+) as cofactor. Post-translationally, phosphorylated by PKA and GSK3 in a sequential manner; phosphorylation results in activation of its activity. Phosphorylation on Thr-447 and Ser-451 depends on the phosphorylation state of Ser-455. Phosphorylation on Ser-455 is decreased by prior phosphorylation on the other 2 residues. Phosphorylated at Ser-455 by BCKDK and dephosphorylated by protein phosphatase PPM1K. ISGylated. In terms of processing, acetylated at Lys-530, Lys-536 and Lys-544 by KAT2B/PCAF. Acetylation is promoted by glucose and stabilizes the protein, probably by preventing ubiquitination at the same sites. Acetylation promotes de novo lipid synthesis. Deacetylated by SIRT2. Post-translationally, ubiquitinated at Lys-530, Lys-536 and Lys-544 by the BCR(KLHL25) E3 ubiquitin ligase complex and UBR4, leading to its degradation. Ubiquitination is probably inhibited by acetylation at same site. BCR(KLHL25)-mediated degradation of ACLY promotes fatty acid oxidation and is required for differentiation of inducible regulatory T (iTreg) cells.

Its subcellular location is the cytoplasm. It localises to the cytosol. The catalysed reaction is oxaloacetate + acetyl-CoA + ADP + phosphate = citrate + ATP + CoA. With respect to regulation, phosphorylation results in activation of its activity. Glucose 6-phosphate, fructose 6-phosphate, fructose 2,6-bisphosphate, ribulose 5-phosphate, and fructose 1,6-bisphosphate also act as activators. Its function is as follows. Catalyzes the cleavage of citrate into oxaloacetate and acetyl-CoA, the latter serving as common substrate in multiple biochemical reactions in protein, carbohydrate and lipid metabolism. The protein is ATP-citrate synthase (ACLY) of Bos taurus (Bovine).